The primary structure comprises 374 residues: Queuine tRNA-ribosyltransferase (374 aa).

Aspartate 89 functions as the Proton acceptor in the catalytic mechanism. Substrate-binding positions include aspartate 89–phenylalanine 93, aspartate 143, glutamine 187, and glycine 214. Residues glycine 245–aspartate 251 form an RNA binding region. Aspartate 264 acts as the Nucleophile in catalysis. The interval threonine 269–arginine 273 is RNA binding; important for wobble base 34 recognition. Positions 302, 304, 307, and 333 each coordinate Zn(2+).

Belongs to the queuine tRNA-ribosyltransferase family. As to quaternary structure, homodimer. Within each dimer, one monomer is responsible for RNA recognition and catalysis, while the other monomer binds to the replacement base PreQ1. Zn(2+) serves as cofactor.

The catalysed reaction is 7-aminomethyl-7-carbaguanine + guanosine(34) in tRNA = 7-aminomethyl-7-carbaguanosine(34) in tRNA + guanine. It participates in tRNA modification; tRNA-queuosine biosynthesis. Its function is as follows. Catalyzes the base-exchange of a guanine (G) residue with the queuine precursor 7-aminomethyl-7-deazaguanine (PreQ1) at position 34 (anticodon wobble position) in tRNAs with GU(N) anticodons (tRNA-Asp, -Asn, -His and -Tyr). Catalysis occurs through a double-displacement mechanism. The nucleophile active site attacks the C1' of nucleotide 34 to detach the guanine base from the RNA, forming a covalent enzyme-RNA intermediate. The proton acceptor active site deprotonates the incoming PreQ1, allowing a nucleophilic attack on the C1' of the ribose to form the product. After dissociation, two additional enzymatic reactions on the tRNA convert PreQ1 to queuine (Q), resulting in the hypermodified nucleoside queuosine (7-(((4,5-cis-dihydroxy-2-cyclopenten-1-yl)amino)methyl)-7-deazaguanosine). The sequence is that of Queuine tRNA-ribosyltransferase from Shewanella sp. (strain MR-4).